The sequence spans 646 residues: Secretogranin-1 (646 aa).

The first 20 residues, Met1 to Ser20, serve as a signal peptide directing secretion. A disulfide bridge connects residues Cys36 and Cys57. A compositionally biased stretch (basic and acidic residues) spans Glu67–Ala90. Positions Glu67–Thr483 are disordered. Ser74 carries the post-translational modification Phosphoserine. Thr79 and Thr92 each carry phosphothreonine. 4 positions are modified to phosphoserine: Ser93, Ser99, Ser100, and Ser104. Ser93 carries an O-linked (Xyl...) (chondroitin sulfate) serine glycan. A glycan (O-linked (GalNAc...) threonine) is linked at Thr113. Basic and acidic residues-rich tracts occupy residues Ser119–Gly128 and Lys137–Ser173. Phosphoserine is present on residues Ser123, Ser146, and Ser168. Over residues Ala182 to Pro191 the composition is skewed to polar residues. Residue Thr190 is glycosylated (O-linked (GalNAc...) threonine). Ser205 is modified (phosphoserine). Residues Gly208–Ser228 are compositionally biased toward basic and acidic residues. An O-linked (Xyl...) (chondroitin sulfate) serine glycan is attached at Ser222. The segment covering Arg260–Arg270 has biased composition (basic residues). Phosphoserine is present on residues Ser276, Ser277, and Ser295. Position 315 is a sulfotyrosine (Tyr315). The span at Gly340 to Arg361 shows a compositional bias: basic and acidic residues. Ser351 and Ser354 each carry phosphoserine. At Tyr374 the chain carries Phosphotyrosine. A phosphoserine mark is found at Ser375 and Ser378. Residues Thr406–Asp425 show a composition bias toward basic and acidic residues. At Tyr441 the chain carries Sulfotyrosine. 2 stretches are compositionally biased toward basic and acidic residues: residues Gly442 to Arg451 and Asp459 to Leu472. Residue Gln476 is modified to Pyrrolidone carboxylic acid; in secretogranin-1(476-566). Residues Ser502, Ser503, and Ser514 each carry the phosphoserine modification. Residue Tyr535 is modified to Sulfotyrosine. Gln567 carries the post-translational modification Pyrrolidone carboxylic acid; in peptide BAM-1745. A Phosphoserine modification is found at Ser584. The segment at Pro588–Glu620 is disordered. The residue at position 591 (Tyr591) is a Sulfotyrosine. Ser593 and Ser598 each carry phosphoserine. Pyrrolidone carboxylic acid; in Secretolytin; partial is present on Gln634.

Belongs to the chromogranin/secretogranin protein family. In terms of assembly, interacts with ITPR1 in the secretory granules. Post-translationally, O-glycosylated by the trisaccharide, GalNAc-Gal-NeuAc, on 2 sites in the N-terminal. May be glycated. Extensively phosphorylated. In terms of processing, differentially processed on numerous sites throughout the sequence depending on tissue type.

The protein resides in the cytoplasmic vesicle. The protein localises to the secretory vesicle membrane. It is found in the secreted. Functionally, secretogranin-1 is a neuroendocrine secretory granule protein, which may be the precursor for other biologically active peptides. The 16 pairs of basic AA distributed throughout its sequence may be used as proteolytic cleavage sites. Its function is as follows. Secretolytin has antibacterial activity. The sequence is that of Secretogranin-1 (CHGB) from Bos taurus (Bovine).